The chain runs to 112 residues: Putative pterin-4-alpha-carbinolamine dehydratase (112 aa).

This sequence belongs to the pterin-4-alpha-carbinolamine dehydratase family.

It catalyses the reaction (4aS,6R)-4a-hydroxy-L-erythro-5,6,7,8-tetrahydrobiopterin = (6R)-L-erythro-6,7-dihydrobiopterin + H2O. The protein is Putative pterin-4-alpha-carbinolamine dehydratase of Shewanella pealeana (strain ATCC 700345 / ANG-SQ1).